The following is a 1129-amino-acid chain: MLEEMQQMKTIPVLTNSRPEFKQIPKKLSRHLANLGGPHVDSFDEMLTVGLDNSAKHMIPNHWLSPAGEKISMKVESIWIAKPKVPQDVIDVRTREIYPTDSRQLHVSYSGMCSVRLGWSVNGVQKTPINMDLGEVPIMLRSKACNLGQATPEEMVKHGEHDSEWGGIFVIRGNEKIVRMLIMTRRNHPICVKRSSWKDRGQNFSDLGMLVQTVREDESSLSNVVHYLNNGTAKFMFSHVKRLSYVPVCLILKCLMDYTDEEIYNRLVQGYESDQYYVSCVQAMLREVQNENVYTHAQCKSFIGNLFRARFPEVPEWQPDDDVTDFILRERVMIHLDTYEDKFQLIVFMIQKLFQCAQGKYKVENVDSAMMQEVLLPGHLYQKYLSERVESWVSQVRRCLQKKLTSPDALVTSAVMTQCMRQAGGVGRAIESFLATGNIASRTGLGLMQNSGLVIMAENINRMRYMSHFRAIHRGSYFTTMRTTEARQLLPDAWGFICPVHTPDGTPCGLLNHLTLTCEISMRPDPKLVKAIPKHLIDMGMMPLSNRRYLGEKLYVVFLDGKHLGHIHQSEAEKIVDELRYGKIFGTLPQMMEIGFIPFKKNGQFPGLYIATGPARMMRPVWNLKWKRVEYIGTLEQLYMEIAIDAKEMYPDFTTHLELAKTHFMSNLANLIPMPDYNQSPRNMYQCQMGKQTMGTPCLNWPKQAANKLYRLQTPGTPLFRPVHYDNIQLDDFAMGTNAIVAVISYTGYDMEDAMIINKAAYERGFAYGSIYKTKFLTLDKKSSYFARHPHMPELIKHLDTDGLPHPGSKLSYGSPLYCYFDGEVATYKVVKMDEKEDCIVESIRQLGSFDLSPKKMVAITLRVPRPATIGDKFASRAGQKGICSQKYPAEDLPFTESGLIPDIVFNPHGFPSRMTIAMMIETMAGKGAAIHGNVYDATPFRFSEENTAIDYFGKMLEAGGYNYYGTERLYSGVDGREMTADIFFGVVHYQRLRHMVFDKWQVRSTGAVEARTHQPIKGRKRGGGVRFGEMERDALISHGAAFLLQDRLFHNSDKTHTLVCHKCGSILAPLQRIVKRNETGGLSSQPDTCRLCGDNSSVSMIEIPFSFKYLVTELSSVNINARFKLNEI.

The C4-type zinc finger occupies 1061–1093 (CHKCGSILAPLQRIVKRNETGGLSSQPDTCRLC).

It belongs to the RNA polymerase beta chain family. In terms of assembly, component of the RNA polymerase I (Pol I) complex consisting of at least 13 subunits.

The protein resides in the nucleus. The protein localises to the nucleolus. The enzyme catalyses RNA(n) + a ribonucleoside 5'-triphosphate = RNA(n+1) + diphosphate. Its function is as follows. DNA-dependent RNA polymerase catalyzes the transcription of DNA into RNA using the four ribonucleoside triphosphates as substrates. Second largest core component of RNA polymerase I which synthesizes ribosomal RNA precursors. Proposed to contribute to the polymerase catalytic activity and forms the polymerase active center together with the largest subunit. Pol I is composed of mobile elements and RPA2 is part of the core element with the central large cleft and probably a clamp element that moves to open and close the cleft. The chain is DNA-directed RNA polymerase I subunit RPA2 from Drosophila melanogaster (Fruit fly).